Reading from the N-terminus, the 427-residue chain is L-glutamine:2-deoxy-scyllo-inosose aminotransferase (427 aa).

A disordered region spans residues 1 to 20 (MPLQSSRLAVDNGTPVRGKP). Residue K205 is modified to N6-(pyridoxal phosphate)lysine.

The protein belongs to the DegT/DnrJ/EryC1 family. L-glutamine:2-deoxy-scyllo-inosose/scyllo-inosose aminotransferase subfamily. It depends on pyridoxal 5'-phosphate as a cofactor.

The catalysed reaction is 2-deoxy-L-scyllo-inosose + L-glutamine = 2-deoxy-scyllo-inosamine + 2-oxoglutaramate. It catalyses the reaction 3-amino-2,3-dideoxy-scyllo-inosose + L-glutamine = 2-deoxystreptamine + 2-oxoglutaramate. It participates in metabolic intermediate biosynthesis; 2-deoxystreptamine biosynthesis; 2-deoxystreptamine from D-glucose 6-phosphate: step 2/4. Its pathway is antibiotic biosynthesis; kanamycin biosynthesis. In terms of biological role, catalyzes the PLP-dependent transamination of 2-deoxy-scyllo-inosose (2-DOI) to form 2-deoxy-scyllo-inosamine (2-DOIA) using L-glutamine as the amino donor. Also catalyzes the transamination of 3-amino-2,3-dideoxy-scyllo-inosose (keto-2-DOIA) into 2-deoxystreptamine (2-DOS). This chain is L-glutamine:2-deoxy-scyllo-inosose aminotransferase (kanB), found in Streptomyces kanamyceticus.